The sequence spans 96 residues: Non-specific lipid-transfer protein 2G (96 aa).

The first 29 residues, 1-29 (MAGMMKKQVVTALMLALVVLAAAPGGARA), serve as a signal peptide directing secretion. 4 disulfides stabilise this stretch: Cys-31-Cys-63, Cys-39-Cys-53, Cys-54-Cys-89, and Cys-65-Cys-96.

The protein resides in the secreted. Its subcellular location is the cell wall. In terms of biological role, transfer lipids across membranes. May play a role in plant defense or in the biosynthesis of cuticle layers. This chain is Non-specific lipid-transfer protein 2G, found in Triticum aestivum (Wheat).